A 241-amino-acid chain; its full sequence is Phosphoribosylaminoimidazole-succinocarboxamide synthase (241 aa).

Belongs to the SAICAR synthetase family.

The enzyme catalyses 5-amino-1-(5-phospho-D-ribosyl)imidazole-4-carboxylate + L-aspartate + ATP = (2S)-2-[5-amino-1-(5-phospho-beta-D-ribosyl)imidazole-4-carboxamido]succinate + ADP + phosphate + 2 H(+). Its pathway is purine metabolism; IMP biosynthesis via de novo pathway; 5-amino-1-(5-phospho-D-ribosyl)imidazole-4-carboxamide from 5-amino-1-(5-phospho-D-ribosyl)imidazole-4-carboxylate: step 1/2. The chain is Phosphoribosylaminoimidazole-succinocarboxamide synthase from Methanoculleus marisnigri (strain ATCC 35101 / DSM 1498 / JR1).